The following is a 435-amino-acid chain: Transmembrane protease serine 4 (435 aa).

Residues 1-30 (MESDSGQPLNNRDIVPFRKPRRPQETFKKV) are Cytoplasmic-facing. A helical; Signal-anchor for type II membrane protein transmembrane segment spans residues 31–51 (GIPIIAVLLSLIALVIVALLI). Residues 52-435 (KVILDKYYFI…WIYNVRKSEM (384 aa)) lie on the Extracellular side of the membrane. The region spanning 59–101 (YFICGSPLTFIQRGQLCDGHLDCASGEDEEHCVKDFPEKPGVA) is the LDL-receptor class A domain. 8 disulfides stabilise this stretch: C62/C81, C75/C90, C125/C181, C138/C191, C194/C308, C228/C244, C354/C370, and C381/C408. The 101-residue stretch at 102–202 (VRLSKDRSTL…DCGKSLKTPR (101 aa)) folds into the SRCR domain. N-linked (GlcNAc...) asparagine glycosylation is found at N128 and N176. The region spanning 203–432 (VVGGVEAPVD…YLNWIYNVRK (230 aa)) is the Peptidase S1 domain. Active-site charge relay system residues include H243 and D288. The active-site Charge relay system is S385.

The protein belongs to the peptidase S1 family. In terms of processing, proteolytically processed; probably by an autocatalytic mechanism.

Its subcellular location is the cell membrane. It is found in the secreted. In terms of biological role, plasma membrane-anchored serine protease that directly induces processing of pro-uPA/PLAU into the active form through proteolytic activity. Seems to be capable of activating ENaC. This chain is Transmembrane protease serine 4, found in Mus musculus (Mouse).